A 201-amino-acid chain; its full sequence is Ribosome maturation factor RimM (201 aa).

The PRC barrel domain occupies 94–168; that stretch reads EDEYYHADLI…RLVADPPLGL (75 aa). The tract at residues 164 to 201 is disordered; the sequence is PPLGLLDDTRPPAGVEGEVEEDPGVGIDEDGDGKGGAS. The segment covering 180-194 has biased composition (acidic residues); it reads GEVEEDPGVGIDEDG.

The protein belongs to the RimM family. In terms of assembly, binds ribosomal protein uS19.

It is found in the cytoplasm. An accessory protein needed during the final step in the assembly of 30S ribosomal subunit, possibly for assembly of the head region. Essential for efficient processing of 16S rRNA. May be needed both before and after RbfA during the maturation of 16S rRNA. It has affinity for free ribosomal 30S subunits but not for 70S ribosomes. This is Ribosome maturation factor RimM from Rhodospirillum rubrum (strain ATCC 11170 / ATH 1.1.1 / DSM 467 / LMG 4362 / NCIMB 8255 / S1).